The chain runs to 517 residues: Glucose-6-phosphate isomerase (517 aa).

Glu345 (proton donor) is an active-site residue. Active-site residues include His376 and Lys490.

The protein belongs to the GPI family.

It localises to the cytoplasm. The catalysed reaction is alpha-D-glucose 6-phosphate = beta-D-fructose 6-phosphate. The protein operates within carbohydrate biosynthesis; gluconeogenesis. It functions in the pathway carbohydrate degradation; glycolysis; D-glyceraldehyde 3-phosphate and glycerone phosphate from D-glucose: step 2/4. Functionally, catalyzes the reversible isomerization of glucose-6-phosphate to fructose-6-phosphate. This Erythrobacter litoralis (strain HTCC2594) protein is Glucose-6-phosphate isomerase.